A 412-amino-acid polypeptide reads, in one-letter code: Chorismate synthase (412 aa).

Arginine 40 and arginine 46 together coordinate NADP(+). FMN is bound by residues 135 to 137, 256 to 257, glycine 300, 315 to 319, and arginine 341; these read RAS, QA, and KPIST. The segment covering 391-404 has biased composition (basic and acidic residues); that stretch reads QREPRQESSDEQPA. Positions 391–412 are disordered; sequence QREPRQESSDEQPARRAANTAG.

This sequence belongs to the chorismate synthase family. Homotetramer. Requires FMNH2 as cofactor.

The enzyme catalyses 5-O-(1-carboxyvinyl)-3-phosphoshikimate = chorismate + phosphate. The protein operates within metabolic intermediate biosynthesis; chorismate biosynthesis; chorismate from D-erythrose 4-phosphate and phosphoenolpyruvate: step 7/7. Its function is as follows. Catalyzes the anti-1,4-elimination of the C-3 phosphate and the C-6 proR hydrogen from 5-enolpyruvylshikimate-3-phosphate (EPSP) to yield chorismate, which is the branch point compound that serves as the starting substrate for the three terminal pathways of aromatic amino acid biosynthesis. This reaction introduces a second double bond into the aromatic ring system. The sequence is that of Chorismate synthase from Mycobacteroides abscessus (strain ATCC 19977 / DSM 44196 / CCUG 20993 / CIP 104536 / JCM 13569 / NCTC 13031 / TMC 1543 / L948) (Mycobacterium abscessus).